Consider the following 946-residue polypeptide: Protein translocase subunit SecA (946 aa).

ATP contacts are provided by residues Q90, 108–112 (GEGKT), and D509.

It belongs to the SecA family. Monomer and homodimer. Part of the essential Sec protein translocation apparatus which comprises SecA, SecYEG and auxiliary proteins SecDF. Other proteins may also be involved.

The protein resides in the cell inner membrane. It is found in the cellular thylakoid membrane. It localises to the cytoplasm. It catalyses the reaction ATP + H2O + cellular proteinSide 1 = ADP + phosphate + cellular proteinSide 2.. Functionally, part of the Sec protein translocase complex. Interacts with the SecYEG preprotein conducting channel. Has a central role in coupling the hydrolysis of ATP to the transfer of proteins into and across the cell membrane, serving as an ATP-driven molecular motor driving the stepwise translocation of polypeptide chains across the membrane. Probably participates in protein translocation into and across both the cytoplasmic and thylakoid membranes in cyanobacterial cells. The chain is Protein translocase subunit SecA from Synechococcus sp. (strain RCC307).